A 337-amino-acid polypeptide reads, in one-letter code: tRNA N6-adenosine threonylcarbamoyltransferase (337 aa).

Fe cation is bound by residues H111 and H115. Substrate contacts are provided by residues 134–138 (LVSGG), D167, G180, and N272. D300 contributes to the Fe cation binding site.

The protein belongs to the KAE1 / TsaD family. Requires Fe(2+) as cofactor.

The protein resides in the cytoplasm. It catalyses the reaction L-threonylcarbamoyladenylate + adenosine(37) in tRNA = N(6)-L-threonylcarbamoyladenosine(37) in tRNA + AMP + H(+). In terms of biological role, required for the formation of a threonylcarbamoyl group on adenosine at position 37 (t(6)A37) in tRNAs that read codons beginning with adenine. Is involved in the transfer of the threonylcarbamoyl moiety of threonylcarbamoyl-AMP (TC-AMP) to the N6 group of A37, together with TsaE and TsaB. TsaD likely plays a direct catalytic role in this reaction. This is tRNA N6-adenosine threonylcarbamoyltransferase from Nitrosomonas europaea (strain ATCC 19718 / CIP 103999 / KCTC 2705 / NBRC 14298).